Here is a 249-residue protein sequence, read N- to C-terminus: Probable septum site-determining protein MinC (249 aa).

The segment at 89-130 (SLFEPGMPPAMKGGRPAPDFEVPEVDPADPPKAGKGKAAAPI) is disordered. Over residues 119-129 (PKAGKGKAAAP) the composition is skewed to low complexity.

Belongs to the MinC family. Interacts with MinD and FtsZ.

Functionally, cell division inhibitor that blocks the formation of polar Z ring septums. Rapidly oscillates between the poles of the cell to destabilize FtsZ filaments that have formed before they mature into polar Z rings. Prevents FtsZ polymerization. This Rhizobium meliloti (strain 1021) (Ensifer meliloti) protein is Probable septum site-determining protein MinC.